The primary structure comprises 219 residues: Charged multivesicular body protein 5 (219 aa).

A compositionally biased stretch (basic residues) spans 1–10; the sequence is MNRFFGKAKP. The disordered stretch occupies residues 1–21; the sequence is MNRFFGKAKPKAPPPSLTDCI. A coiled-coil region spans residues 26–179; sequence SRAESIDKKI…LGDELLADED (154 aa). The residue at position 86 (serine 86) is a Phosphoserine. The segment at 188–219 is disordered; that stretch reads SAPAIPEGVPTDTKNKDGVLVDEFGLPQIPAS.

Belongs to the SNF7 family. Probable peripherally associated component of the endosomal sorting required for transport complex III (ESCRT-III). ESCRT-III components are thought to multimerize to form a flat lattice on the perimeter membrane of the endosome. Several assembly forms of ESCRT-III may exist that interact and act sequentially. Interacts with VTA1. Interacts with CHMP2A. Interacts with VTA1; the interaction involves soluble CHMP5. Interacts with NOD2. Interacts with BROX. ISGylated. Isgylation inhibits its interaction with VTA1.

It localises to the cytoplasm. The protein localises to the cytosol. The protein resides in the endosome membrane. It is found in the midbody. In terms of biological role, probable peripherally associated component of the endosomal sorting required for transport complex III (ESCRT-III) which is involved in multivesicular bodies (MVBs) formation and sorting of endosomal cargo proteins into MVBs. MVBs contain intraluminal vesicles (ILVs) that are generated by invagination and scission from the limiting membrane of the endosome and mostly are delivered to lysosomes enabling degradation of membrane proteins, such as stimulated growth factor receptors, lysosomal enzymes and lipids. The MVB pathway appears to require the sequential function of ESCRT-O, -I,-II and -III complexes. ESCRT-III proteins mostly dissociate from the invaginating membrane before the ILV is released. The ESCRT machinery also functions in topologically equivalent membrane fission events, such as the terminal stages of cytokinesis. ESCRT-III proteins are believed to mediate the necessary vesicle extrusion and/or membrane fission activities, possibly in conjunction with the AAA ATPase VPS4. This is Charged multivesicular body protein 5 (Chmp5) from Mus musculus (Mouse).